The sequence spans 514 residues: Putative ribose/galactose/methyl galactoside import ATP-binding protein 3 (514 aa).

2 consecutive ABC transporter domains span residues 21 to 256 and 267 to 512; these read LRLD…VGRT and VPTD…SGRS. 53–60 serves as a coordination point for ATP; the sequence is GENGAGKS.

Belongs to the ABC transporter superfamily. Carbohydrate importer 2 (CUT2) (TC 3.A.1.2) family.

The protein localises to the cell inner membrane. The enzyme catalyses D-ribose(out) + ATP + H2O = D-ribose(in) + ADP + phosphate + H(+). It carries out the reaction D-galactose(out) + ATP + H2O = D-galactose(in) + ADP + phosphate + H(+). Part of an ABC transporter complex involved in carbohydrate import. Could be involved in ribose, galactose and/or methyl galactoside import. Responsible for energy coupling to the transport system. In Burkholderia cenocepacia (strain HI2424), this protein is Putative ribose/galactose/methyl galactoside import ATP-binding protein 3.